Reading from the N-terminus, the 277-residue chain is Phosphatidylglycerol--prolipoprotein diacylglyceryl transferase (277 aa).

A run of 4 helical transmembrane segments spans residues 18 to 38 (ISVK…LLLA), 51 to 71 (IIVD…RIYY), 89 to 109 (IWHG…TAVI), and 116 to 136 (ISFW…QAIG). Arg-137 contacts a 1,2-diacyl-sn-glycero-3-phospho-(1'-sn-glycerol). Helical transmembrane passes span 177–197 (QPTF…LLII), 205–225 (GELF…IEGM), and 235–255 (FRVS…LIIY).

It belongs to the Lgt family.

The protein localises to the cell membrane. The enzyme catalyses L-cysteinyl-[prolipoprotein] + a 1,2-diacyl-sn-glycero-3-phospho-(1'-sn-glycerol) = an S-1,2-diacyl-sn-glyceryl-L-cysteinyl-[prolipoprotein] + sn-glycerol 1-phosphate + H(+). Its pathway is protein modification; lipoprotein biosynthesis (diacylglyceryl transfer). Catalyzes the transfer of the diacylglyceryl group from phosphatidylglycerol to the sulfhydryl group of the N-terminal cysteine of a prolipoprotein, the first step in the formation of mature lipoproteins. This chain is Phosphatidylglycerol--prolipoprotein diacylglyceryl transferase, found in Listeria innocua serovar 6a (strain ATCC BAA-680 / CLIP 11262).